Reading from the N-terminus, the 182-residue chain is Adenine phosphoribosyltransferase (182 aa).

This sequence belongs to the purine/pyrimidine phosphoribosyltransferase family. Homodimer.

Its subcellular location is the cytoplasm. The catalysed reaction is AMP + diphosphate = 5-phospho-alpha-D-ribose 1-diphosphate + adenine. It participates in purine metabolism; AMP biosynthesis via salvage pathway; AMP from adenine: step 1/1. In terms of biological role, catalyzes a salvage reaction resulting in the formation of AMP, that is energically less costly than de novo synthesis. The sequence is that of Adenine phosphoribosyltransferase from Campylobacter concisus (strain 13826).